The sequence spans 438 residues: MGGCAGSRRRLSDSEGEETVPEPRLPLLDHQGAHWKNAVGFWLLGLCNNFSYVVMLSAAHDILSHERTSGNQSHVDPGPAPIPHNSSSRFDCNSVSTAAVLLADILPTLVIKLLAPLGLHLLPYSPRVLVSGICAAGSFVLVAFSHSVGTSLCGVVLASISSGLGEVTFLSLTAFYPRAVISWWSSGTGGAGLLGALSYLGLTQAGLSPQQTLLSMLGIPALLLASYFLLLTSPEAQDPGGEEEAESSARQPLIRTEAPESKPGSSSSLSLRERWTVFKGLLWYIVPLVVVYFAEYFINQGLFELLFFRNTSLSHAQQYRWYQMLYQAGVFASRSSLRCCHIRFTWALALLQCLNLAFLLADVWFGFLLSIYFVFLIILYEGLLGGAAYVNTFHNIALETSDEHREFAMATTCISDTLGISLSGLLALPLHDFLCQLS.

Residues 1–25 (MGGCAGSRRRLSDSEGEETVPEPRL) are disordered. The Cytoplasmic portion of the chain corresponds to 1–37 (MGGCAGSRRRLSDSEGEETVPEPRLPLLDHQGAHWKN). Residues serine 12 and serine 14 each carry the phosphoserine modification. The chain crosses the membrane as a helical span at residues 38 to 58 (AVGFWLLGLCNNFSYVVMLSA). Residues 59 to 127 (AHDILSHERT…GLHLLPYSPR (69 aa)) lie on the Lumenal side of the membrane. Residues asparagine 71 and asparagine 85 are each glycosylated (N-linked (GlcNAc...) asparagine). A helical transmembrane segment spans residues 128-148 (VLVSGICAAGSFVLVAFSHSV). Residues 149 to 151 (GTS) lie on the Cytoplasmic side of the membrane. Residues 152 to 172 (LCGVVLASISSGLGEVTFLSL) traverse the membrane as a helical segment. Residues 173–182 (TAFYPRAVIS) lie on the Lumenal side of the membrane. The helical transmembrane segment at 183-203 (WWSSGTGGAGLLGALSYLGLT) threads the bilayer. Residues 204-277 (QAGLSPQQTL…SLSLRERWTV (74 aa)) lie on the Cytoplasmic side of the membrane. The tract at residues 237 to 268 (QDPGGEEEAESSARQPLIRTEAPESKPGSSSS) is disordered. The short motif at 242–244 (EEE) is the Lysosomal targeting motif element. The Lysosomal targeting motif. Required for AP1G1, AP2A2 and AP3D1 interaction signature appears at 253 to 254 (LI). The chain crosses the membrane as a helical span at residues 278–298 (FKGLLWYIVPLVVVYFAEYFI). Residues 299–346 (NQGLFELLFFRNTSLSHAQQYRWYQMLYQAGVFASRSSLRCCHIRFTW) are Lumenal-facing. An N-linked (GlcNAc...) asparagine glycan is attached at asparagine 310. The helical transmembrane segment at 347–367 (ALALLQCLNLAFLLADVWFGF) threads the bilayer. Residues 368–438 (LLSIYFVFLI…PLHDFLCQLS (71 aa)) are Cytoplasmic-facing. Positions 409 to 419 (MATTCISDTLG) match the Lysosomal targeting motif motif. Cysteine 435 carries the cysteine methyl ester modification. A lipid anchor (S-farnesyl cysteine) is attached at cysteine 435. Positions 436–438 (QLS) are cleaved as a propeptide — removed in mature form.

Belongs to the battenin family. As to quaternary structure, interacts with DCTN1, KIF3A, RAB7A and RILP. Interacts with CLN5. Post-translationally, highly glycosylated. In terms of processing, farnesylation is important for trafficking to lysosomes.

The protein resides in the lysosome membrane. It localises to the late endosome. It is found in the lysosome. Mediates microtubule-dependent, anterograde transport connecting the Golgi network, endosomes, autophagosomes, lysosomes and plasma membrane, and participates in several cellular processes such as regulation of lysosomal pH, lysosome protein degradation, receptor-mediated endocytosis, autophagy, transport of proteins and lipids from the TGN, apoptosis and synaptic transmission. Facilitates the proteins transport from trans-Golgi network (TGN)-to other membrane compartments such as transport of microdomain-associated proteins to the plasma membrane, IGF2R transport to the lysosome where it regulates the CTSD release leading to regulation of CTSD maturation and thereby APP intracellular processing. Moreover regulates CTSD activity in response to osmotic stress. Also binds galactosylceramide and transports it from the trans Golgi to the rafts, which may have immediate and downstream effects on cell survival by modulating ceramide synthesis. At the plasma membrane, regulates actin-dependent events including filopodia formation, cell migration, and pinocytosis through ARF1-CDC42 pathway and also the cytoskeleton organization through interaction with MYH10 and fodrin leading to the regulation of the plasma membrane association of Na+, K+ ATPase complex. Regulates synaptic transmission in the amygdala, hippocampus, and cerebellum through regulation of synaptic vesicles density and their proximity to active zones leading to modulation of short-term plasticity and age-dependent anxious behavior, learning and memory. Regulates autophagic vacuoles (AVs) maturation by modulating the trafficking between endocytic and autophagolysosomal/lysosomal compartments, which involves vesicle fusion leading to regulation of degradation process. Also participates in cellular homeostasis of compounds such as, water, ions, amino acids, proteins and lipids in several tissue namely in brain and kidney through regulation of their transport and synthesis. The chain is Battenin from Macaca fascicularis (Crab-eating macaque).